Reading from the N-terminus, the 153-residue chain is MSQSGATVSQDCITAFNDLKLNKKYKFIVYKLSDDYKEIVIDKASESRDWEDFRETLVNATAKSRTGAVGKGPRYAVYDFEYNLASGDGIRNKITFIAWSPDDAGIQPKMIYASSKEALKRSLTGIATELQANDTDDIEYDSILKTVSKGLAA.

The ADF-H domain maps to 4 to 148 (SGATVSQDCI…EYDSILKTVS (145 aa)).

This sequence belongs to the actin-binding proteins ADF family.

The protein resides in the cytoplasm. It localises to the cytoskeleton. The protein localises to the nucleus matrix. In terms of biological role, controls reversibly actin polymerization and depolymerization in a pH-sensitive manner. It has the ability to bind G- and F-actin in a 1:1 ratio of cofilin to actin. Binding to F-actin is regulated by tropomyosin. It is the major component of intranuclear and cytoplasmic actin rods. Required for accumulation of actin at the cell division site via depolymerizing actin at the cell ends. In association with myosin II has a role in the assembly of the contractile ring via severing actin filaments. Involved in the maintenance of the contractile ring once formed. In association with profilin and capping protein, has a role in the mitotic reorganization of the actin cytoskeleton. This Gibberella zeae (strain ATCC MYA-4620 / CBS 123657 / FGSC 9075 / NRRL 31084 / PH-1) (Wheat head blight fungus) protein is Cofilin (COF1).